Reading from the N-terminus, the 119-residue chain is Single-stranded DNA-binding protein (119 aa).

The 100-residue stretch at 3–102 (INIVTLVGRV…IRVDQLELLG (100 aa)) folds into the SSB domain.

In terms of assembly, homotetramer.

The polypeptide is Single-stranded DNA-binding protein (ssb1) (Anabaena variabilis).